The sequence spans 425 residues: Acyl-lipid (8-3)-desaturase (425 aa).

Residues 1–25 (MPPRDSYSYAAPPSAQLHEVDTPQE) form a disordered region. Positions 18–93 (HEVDTPQEHD…SRPVHKGYSP (76 aa)) constitute a Cytochrome b5 heme-binding domain. H47 and H69 together coordinate heme. Residues 134-154 (VAGAALIWHGYTFAGIAMLGV) traverse the membrane as a helical segment. The Histidine box-1 signature appears at 164-168 (HEGGH). The helical transmembrane segment at 175–197 (IAFDRAIQVACYGLGCGMSGAWW) threads the bilayer. The Histidine box-2 motif lies at 201-206 (HNKHHA). The next 2 membrane-spanning stretches (helical) occupy residues 241–261 (WLSM…ALGW) and 297–317 (GAGY…MYIF). A Histidine box-3 motif is present at residues 365–369 (QIEHH).

Belongs to the fatty acid desaturase type 1 family. Fe(2+) serves as cofactor.

The protein resides in the membrane. It carries out the reaction an (8Z,11Z,14Z)-icosatrienoyl-containing glycerolipid + 2 Fe(II)-[cytochrome b5] + O2 + 2 H(+) = (5Z,8Z,11Z,14Z)-eicosatetraenoyl-containing glycerolipid + 2 Fe(III)-[cytochrome b5] + 2 H2O. The enzyme catalyses an (8Z,11Z,14Z,17Z)-eicosatetraenoyl-containing glycerolipid + 2 Fe(II)-[cytochrome b5] + O2 + 2 H(+) = a (5Z,8Z,11Z,14Z,17Z)-eicosapentaenoyl-containing glycerolipid + 2 Fe(III)-[cytochrome b5] + 2 H2O. In terms of biological role, fatty acid desaturase that introduces a cis double bond at the 5-position in 20-carbon polyunsaturated fatty acids incorporated in a glycerolipid that contain a Delta(8) double bond. The chain is Acyl-lipid (8-3)-desaturase from Rebecca salina (Marine microalga).